A 386-amino-acid polypeptide reads, in one-letter code: MGFDLATDLAARRRQHRYRQARIMDGPSGRHALLGGRQYLNFCSNDYLGLANDPAVVAAFQQGAADWGVGSGASHLVCGHQRPHQQLEEALAAHTGRQRALLFSTGYMANLGVMTALLSKGDAVFQDRLNHASLLDGGLLSGARFRRFPHNDGQALASQLARSEARRKLVVVDGVFSMDGDEAPLVDYAEACEGHDAWLMVDDAHGIGVLDAQGRGSVFTQGVNERVPVLMGTLGKGLGTAGAFVAGSDELIETLIQFARTFIYTTAMPAAVASATLVSLRKSREENWRRDTLAELIARFRQGARALGYTLMPSQTPIQPLLIGSDVDATALSEALREKGFLITAIRPPTVREGEARLRVTLSAAHEVEDVDALLAALAQCQTQDV.

A substrate-binding site is contributed by R19. A pyridoxal 5'-phosphate-binding site is contributed by 106–107; it reads GY. Residue H131 coordinates substrate. Pyridoxal 5'-phosphate contacts are provided by S177, H205, and T233. An N6-(pyridoxal phosphate)lysine modification is found at K236. T350 is a substrate binding site.

It belongs to the class-II pyridoxal-phosphate-dependent aminotransferase family. BioF subfamily. Homodimer. Requires pyridoxal 5'-phosphate as cofactor.

The enzyme catalyses 6-carboxyhexanoyl-[ACP] + L-alanine + H(+) = (8S)-8-amino-7-oxononanoate + holo-[ACP] + CO2. It functions in the pathway cofactor biosynthesis; biotin biosynthesis. Functionally, catalyzes the decarboxylative condensation of pimeloyl-[acyl-carrier protein] and L-alanine to produce 8-amino-7-oxononanoate (AON), [acyl-carrier protein], and carbon dioxide. The polypeptide is 8-amino-7-oxononanoate synthase (Alcanivorax borkumensis (strain ATCC 700651 / DSM 11573 / NCIMB 13689 / SK2)).